Reading from the N-terminus, the 538-residue chain is MTGFTNAGFENDEPVKPKAGFEPDTASLREKVVLNPGEKWRILKNISIISIAFMVQFTAFQGTANLQSSINAKDGLGTVSLSAIYAALVVSCIFLPTLIIRKLTVKWTLVCSMLCYAPYIAFQLFPRFYTLVPAGILVGMGAAPMWASKATYLTQVGQVYAKITEQAVDAIIVRFFGFFFLAWQSAELWGNLISSLVLSSGAHGGGSSSNTTVSEEDLQFCGANFCTTGSGGHGNLERPPEDEIFEISMIYLSCIVAAVCIIAFFLDPLKRYGEKRKGSNSAAELSGLQLLSATFRQMKKPNLQLLIPITVFIGMEQAFIGADFTQAYVACALGVNKIGFVMICFGVVNALCSILFGSVMKYIGRTPIIVLGAVVHFTLITVELFWRPNPDNPIIFYAMSGLWGVGDAVWQTQINGLYGLLFRRNKEAAFSNYRLWESAGFVIAYAYATTLCTQMKLYILLAVLTLGCIGYVIVEILYRKKQRKLKKQEKLEAAEKEKEAAAAAAAAALAAAEAGADGVEETDDELDDLEEDIVVTRL.

N-linked (GlcNAc...) asparagine glycosylation is present at asparagine 45. A run of 5 helical transmembrane segments spans residues 46 to 66 (ISIISIAFMVQFTAFQGTANL), 80 to 100 (SLSAIYAALVVSCIFLPTLII), 105 to 125 (VKWTLVCSMLCYAPYIAFQLF), 128 to 148 (FYTLVPAGILVGMGAAPMWAS), and 170 to 190 (AIIVRFFGFFFLAWQSAELWG). Asparagine 210 carries N-linked (GlcNAc...) asparagine glycosylation. The next 7 helical transmembrane spans lie at 244-264 (IFEISMIYLSCIVAAVCIIAF), 305-325 (LLIPITVFIGMEQAFIGADFT), 338-358 (IGFVMICFGVVNALCSILFGS), 366-386 (TPIIVLGAVVHFTLITVELFW), 394-414 (IIFYAMSGLWGVGDAVWQTQI), 435-455 (LWESAGFVIAYAYATTLCTQM), and 457-477 (LYILLAVLTLGCIGYVIVEIL).

This sequence belongs to the unc-93 family.

It is found in the membrane. This chain is UNC93-like protein, found in Drosophila melanogaster (Fruit fly).